The chain runs to 100 residues: NADH-ubiquinone oxidoreductase chain 4L (100 aa).

3 consecutive transmembrane segments (helical) span residues 3-23 (ILNH…GIIL), 28-48 (IIII…NFIY), and 64-84 (LILT…IVFF).

It belongs to the complex I subunit 4L family.

It is found in the mitochondrion membrane. The catalysed reaction is a ubiquinone + NADH + 5 H(+)(in) = a ubiquinol + NAD(+) + 4 H(+)(out). Functionally, core subunit of the mitochondrial membrane respiratory chain NADH dehydrogenase (Complex I) that is believed to belong to the minimal assembly required for catalysis. Complex I functions in the transfer of electrons from NADH to the respiratory chain. The immediate electron acceptor for the enzyme is believed to be ubiquinone. In Phytophthora infestans (Potato late blight agent), this protein is NADH-ubiquinone oxidoreductase chain 4L (ND4L).